Consider the following 61-residue polypeptide: Small ribosomal subunit protein uS14B (61 aa).

Cysteine 24, cysteine 27, cysteine 40, and cysteine 43 together coordinate Zn(2+).

It belongs to the universal ribosomal protein uS14 family. Zinc-binding uS14 subfamily. As to quaternary structure, part of the 30S ribosomal subunit. Contacts proteins S3 and S10. The cofactor is Zn(2+).

Functionally, binds 16S rRNA, required for the assembly of 30S particles and may also be responsible for determining the conformation of the 16S rRNA at the A site. The protein is Small ribosomal subunit protein uS14B of Salinispora arenicola (strain CNS-205).